A 494-amino-acid polypeptide reads, in one-letter code: Anaerobic nitric oxide reductase flavorubredoxin (494 aa).

Residues 30 to 210 (TKGTSYNSYL…PFSALVTAKI (181 aa)) form a zinc metallo-hydrolase region. 6 residues coordinate Fe cation: His79, Glu81, Asp83, His147, Asp166, and His227. One can recognise a Flavodoxin-like domain in the interval 254 to 393 (ITIFYDSMSN…ECREHGQQIA (140 aa)). FMN-binding positions include 260–264 (SMSNN) and 342–369 (AFGSYGWNGGAVDRIHARLTDAGFETAI). One can recognise a Rubredoxin-like domain in the interval 441-492 (CQCMVCTVCNWVYDPAKGEPNQGIEVGTTWADVPDYFLCPECHLGKDVFVEY). Fe cation contacts are provided by Cys446, Cys449, Cys479, and Cys482.

In the N-terminal section; belongs to the zinc metallo-hydrolase group 3 family. In terms of assembly, homotetramer. The cofactor is Fe cation. FMN is required as a cofactor.

Its subcellular location is the cytoplasm. It participates in nitrogen metabolism; nitric oxide reduction. Anaerobic nitric oxide reductase; uses NADH to detoxify nitric oxide (NO), protecting several 4Fe-4S NO-sensitive enzymes. Has at least 2 reductase partners, only one of which (NorW, flavorubredoxin reductase) has been identified. NO probably binds to the di-iron center; electrons enter from the NorW at rubredoxin and are transferred sequentially to the FMN center and the di-iron center. Also able to function as an aerobic oxygen reductase. The polypeptide is Anaerobic nitric oxide reductase flavorubredoxin (Vibrio vulnificus (strain YJ016)).